A 399-amino-acid polypeptide reads, in one-letter code: Probable aspartate/prephenate aminotransferase (399 aa).

Positions 39, 125, and 175 each coordinate L-aspartate. Lysine 239 is subject to N6-(pyridoxal phosphate)lysine. Arginine 375 is an L-aspartate binding site.

This sequence belongs to the class-I pyridoxal-phosphate-dependent aminotransferase family. In terms of assembly, homodimer. Pyridoxal 5'-phosphate serves as cofactor.

It localises to the cytoplasm. It catalyses the reaction L-aspartate + 2-oxoglutarate = oxaloacetate + L-glutamate. The catalysed reaction is L-arogenate + 2-oxoglutarate = prephenate + L-glutamate. Its function is as follows. Catalyzes the reversible conversion of aspartate and 2-oxoglutarate to glutamate and oxaloacetate. Can also transaminate prephenate in the presence of glutamate. This chain is Probable aspartate/prephenate aminotransferase (aatA), found in Rickettsia typhi (strain ATCC VR-144 / Wilmington).